Here is a 798-residue protein sequence, read N- to C-terminus: Shutoff protein (798 aa).

Basic and acidic residues predominate over residues 1 to 14; sequence MESTADGDKARGEE. Residues 1–123 form a disordered region; that stretch reads MESTADGDKA…SHSSDSELGC (123 aa). A compositionally biased stretch (acidic residues) spans 33-49; sequence APEDEHPDDGEPDEPAD. Over residues 68-80 the composition is skewed to basic and acidic residues; the sequence is GGRDAECDGEAAR. The span at 86–105 shows a compositional bias: polar residues; sequence DESSAPTTPSTAVRRSSGES. The segment at 309–376 is binding to host EIF4G; the sequence is LMEVLLQPFA…GRPLYRSARA (68 aa). Residues 379 to 497 enclose the RRM domain; the sequence is SVFREPSSIK…AIYALETPTE (119 aa). Phosphotyrosine; by host is present on Tyr-711. The tract at residues 740–798 is disordered; the sequence is YADHARGAATSAEPSRALRPTSVATAAGNRTRGCSSARYRLGPTLRRRSNSSWPREWST. A compositionally biased stretch (polar residues) spans 789–798; it reads NSSWPREWST.

The protein belongs to the adenoviridae shutoff protein family. Monomer. Interacts with hexon protein; this interaction allows chaperoning and trimerization of hexon proteins. Interacts (via N-terminus) with host initiation factor EIF4G (via C-terminus). Interacts (via RRM domain) with viral mRNAs that contain the tripartite leader; this interaction allows ribosome shunting and expression of viral late mRNAs. Might be cleaved by the viral protease. Post-translationally, phosphorylated. Tyrosine phosphorylation enhances preferential binding to tripartite leader mRNAs and allows ribosome shunting. In terms of processing, methylated. Asymmetric dimethylation by host PRMT1 of the Arg/Gly-rich region may regulate shutoff protein binding to hexon and promote the capsid assembly in the nucleus.

The protein localises to the host cytoplasm. Functionally, protein that inhibits host translation while promoting late viral translation by ribosome shunting. Blocks host cap-dependent translation by binding to eIF4G, displacing MKNK1 from cap initiation complexes and preventing EIF4E phosphorylation. Binds to the tripartite leader sequence of viral late mRNAs and recruits host eIF4G, PABPC1/poly-A binding protein and 40S ribosomes subunits on viral mRNAs, allowing ribosome shunting and efficient translation of late viral mRNAs even though conventional translation via ribosome scanning from the cap has been shut off in the host cell. During assembly, acts as a chaperone protein that helps hexon proteins assembly into trimers. This chain is Shutoff protein, found in Galliformes (FAdV-10).